The sequence spans 184 residues: ATP-dependent protease subunit HslV (184 aa).

T12 is a catalytic residue. Na(+)-binding residues include A166, C169, and T172.

This sequence belongs to the peptidase T1B family. HslV subfamily. As to quaternary structure, a double ring-shaped homohexamer of HslV is capped on each side by a ring-shaped HslU homohexamer. The assembly of the HslU/HslV complex is dependent on binding of ATP.

The protein resides in the cytoplasm. The enzyme catalyses ATP-dependent cleavage of peptide bonds with broad specificity.. Allosterically activated by HslU binding. Functionally, protease subunit of a proteasome-like degradation complex believed to be a general protein degrading machinery. This chain is ATP-dependent protease subunit HslV, found in Brucella melitensis biotype 1 (strain ATCC 23456 / CCUG 17765 / NCTC 10094 / 16M).